We begin with the raw amino-acid sequence, 57 residues long: UPF0391 membrane protein RPE_2138 (57 aa).

2 consecutive transmembrane segments (helical) span residues 4 to 24 (WVVT…GGIA) and 30 to 50 (IAKI…VIGL).

Belongs to the UPF0391 family.

The protein resides in the cell membrane. This is UPF0391 membrane protein RPE_2138 from Rhodopseudomonas palustris (strain BisA53).